The chain runs to 253 residues: Molybdate import ATP-binding protein MolC (253 aa).

In terms of domain architecture, ABC transporter spans 5–229 (LSVENLGFYY…NLTALFHLPM (225 aa)). ATP is bound at residue 38–45 (GQNGCGKS).

This sequence belongs to the ABC transporter superfamily. As to quaternary structure, the complex is composed of two ATP-binding proteins (MolC), two transmembrane proteins (MolB) and a solute-binding protein (MolA).

It is found in the cell inner membrane. The enzyme catalyses molybdate(out) + ATP + H2O = molybdate(in) + ADP + phosphate + H(+). The MolBCA complex shows a decrease in affinity in the presence of increasing concentrations of substrate and nucleotide. Functionally, part of the ABC transporter complex MolBCA involved in molybdate import. Responsible for energy coupling to the transport system. Functions as a low-affinity molybdate transporter. This chain is Molybdate import ATP-binding protein MolC, found in Haemophilus influenzae (strain ATCC 51907 / DSM 11121 / KW20 / Rd).